The sequence spans 150 residues: MGIQHEFDIIINGDIALRNLQLHRGDNYGCKLKIISNDYKKLKLRFVIRPDWSEIDEVKGLTVFANNYAVKVNKVDYTLYYVIYEAVIHLYNKKTEILIYSDDENELFKHYYPYISLNMISKKYKIKEENYSSPYIEHPLIPYRDYESMD.

Belongs to the orthopoxvirus OPG027 family.

Plays a role for multiplication of the virus in different cell types. This Cynomys gunnisoni (Gunnison's prairie dog) protein is Interferon antagonist OPG027 (OPG027).